We begin with the raw amino-acid sequence, 391 residues long: GTPase Obg (391 aa).

An Obg domain is found at 1–159 (MQFVDEATID…RRLRLELKVL (159 aa)). An OBG-type G domain is found at 160 to 333 (ADVGLLGMPN…LVYALMNAIE (174 aa)). GTP-binding positions include 166–173 (GMPNAGKS), 191–195 (FTTLI), 213–216 (DIPG), 283–286 (NKID), and 314–316 (SAA). Mg(2+) is bound by residues Ser173 and Thr193. Basic and acidic residues predominate over residues 367-377 (LKAEARQARQN). A disordered region spans residues 367 to 391 (LKAEARQARQNDDDDDHDVEVVYEP). Over residues 378–391 (DDDDDHDVEVVYEP) the composition is skewed to acidic residues.

The protein belongs to the TRAFAC class OBG-HflX-like GTPase superfamily. OBG GTPase family. As to quaternary structure, monomer. Requires Mg(2+) as cofactor.

Its subcellular location is the cytoplasm. Functionally, an essential GTPase which binds GTP, GDP and possibly (p)ppGpp with moderate affinity, with high nucleotide exchange rates and a fairly low GTP hydrolysis rate. Plays a role in control of the cell cycle, stress response, ribosome biogenesis and in those bacteria that undergo differentiation, in morphogenesis control. In Alcanivorax borkumensis (strain ATCC 700651 / DSM 11573 / NCIMB 13689 / SK2), this protein is GTPase Obg.